Here is a 257-residue protein sequence, read N- to C-terminus: Snake venom serine protease serpentokallikrein-2 (257 aa).

An N-terminal signal peptide occupies residues 1–18; the sequence is MVLIRVLANLLILQLSYA. Positions 19–24 are excised as a propeptide; the sequence is QKSSEL. The Peptidase S1 domain occupies 25–248; the sequence is VIGGDECNIN…HLDWIKGIIA (224 aa). Cystine bridges form between Cys-31/Cys-162, Cys-49/Cys-65, Cys-97/Cys-255, Cys-141/Cys-209, Cys-173/Cys-188, and Cys-199/Cys-224. Residue His-64 is the Charge relay system of the active site. Asn-102 is a glycosylation site (N-linked (GlcNAc...) asparagine). The active-site Charge relay system is the Asp-109. The Charge relay system role is filled by Ser-203.

The protein belongs to the peptidase S1 family. Snake venom subfamily. Monomer. As to expression, expressed by the venom gland.

Its subcellular location is the secreted. In terms of biological role, snake venom serine protease that may act in the hemostasis system of the prey. The protein is Snake venom serine protease serpentokallikrein-2 of Protobothrops mucrosquamatus (Taiwan habu).